The sequence spans 944 residues: MSALGRYDRHCDSINSDFGDSVRSCGPEQEELHYIPIRVLGHGAYGEATLYRRTEDDSLVVWKEVGLARLSEKERRDALNEIVILSLLQHDNIIAYYNHFLDSNTLLIELEYCNGGNLFDKIVHQKAQLFQEETVLWYLFQIVSAVSCIHKAGILHRDIKTLNIFLTKANLIKLGDYGLAKQLSSEYSMAETCVGTLYYMSPEICQGVKYSFKSDIWAVGCVLYELLTLTRTFDATNPLNLCVKIVQGNWAVGLDNTVYTQELIEVVHACLEQDPEKRPTADEILERPILSWRRRDMEEKVSMLNRSNKKPRTGTVTEAPIAVVTSRSSEVYVWGGGKTTPQKLDVFKGGWRARQVCAGDAHFAVVTVEKELYTWVNMQGGSKLHGQLGHGDRASYRQPKHVEKLQGKSVQKVSCGSDFTVCITDEGQLYSFGSDYYGCLGVNQSAGSEVLEPLLVDFFLNEPVDQVSCGDSHIMALTRSKSVYSWGCGEYGRLGLDSEDDVYSPQKVEVQRGLCIVNVCCGSDGSFLLTLTGKVLACGLNEHNKLGLNQYTAGIINHEAFQEVPYTTSLTLAKQLSFYKIRSISPGRTHTAAIDERGRLLTFGSNKCGQLGVGDYRKHLGINLLGGPLGGKQVIRVSCGDEFTTAATADNHIFAWGNGGNGRLAMTPNERPQGSDICTSWPRPIFGSLHHVTDLSCRGWHTILIVEKVLNSKTIRSNSSGLSIGTLAQSCSSGGSGSREEDSDRESLTSDPSRGFRGTIEAEPETGPFNTTENMESSSCPSWLRQELEEAEFIPMPDTPNFVSAESSQNGTTSMQDVRETPPDALEKPSFQACTCSTLQEEVRKLQDLVSTYRHEQELLCRENSRLALEVQELNGKLQSAMQMNQVVNKHGEAIHQIQKQLSLHWKSSPPSSGNPEMSREDSDAESWCFLGTEACRSSSGTPM.

Residues tyrosine 34–leucine 290 form the Protein kinase domain. Residues leucine 40 to alanine 48 and lysine 63 contribute to the ATP site. Aspartate 158 (proton acceptor) is an active-site residue. The residue at position 192 (threonine 192) is a Phosphothreonine; by autocatalysis. RCC1 repeat units follow at residues lysine 370–glutamate 426, glycine 427–serine 480, lysine 481–threonine 532, glycine 533–arginine 597, glycine 598–aspartate 650, and asparagine 651–lysine 708. 2 disordered regions span residues threonine 726–serine 782 and isoleucine 794–alanine 825. Over residues serine 738–leucine 748 the composition is skewed to basic and acidic residues. Polar residues-rich tracts occupy residues proline 768–proline 781 and asparagine 801–glutamine 816. The stretch at threonine 835 to lysine 890 forms a coiled coil. The segment at tryptophan 906 to alanine 925 is disordered.

It belongs to the protein kinase superfamily. NEK Ser/Thr protein kinase family. NIMA subfamily. In terms of assembly, homodimer. The cofactor is Mg(2+). In terms of processing, autophosphorylated on serine and threonine residues.

Its subcellular location is the cytoplasm. The enzyme catalyses L-seryl-[protein] + ATP = O-phospho-L-seryl-[protein] + ADP + H(+). It carries out the reaction L-threonyl-[protein] + ATP = O-phospho-L-threonyl-[protein] + ADP + H(+). Pleiotropic regulator of mitotic progression, participating in the control of spindle dynamics and chromosome separation. Important for G1/S transition and S phase progression. Phosphorylates nek6 and nek7 and stimulates their activity. This chain is Serine/threonine-protein kinase Nek9 (nek9), found in Xenopus laevis (African clawed frog).